A 420-amino-acid polypeptide reads, in one-letter code: ATP phosphoribosyltransferase regulatory subunit (420 aa).

Belongs to the class-II aminoacyl-tRNA synthetase family. HisZ subfamily. In terms of assembly, heteromultimer composed of HisG and HisZ subunits.

The protein localises to the cytoplasm. It participates in amino-acid biosynthesis; L-histidine biosynthesis; L-histidine from 5-phospho-alpha-D-ribose 1-diphosphate: step 1/9. Required for the first step of histidine biosynthesis. May allow the feedback regulation of ATP phosphoribosyltransferase activity by histidine. The sequence is that of ATP phosphoribosyltransferase regulatory subunit from Bacillus cereus (strain AH187).